A 156-amino-acid chain; its full sequence is 6,7-dimethyl-8-ribityllumazine synthase (156 aa).

5-amino-6-(D-ribitylamino)uracil-binding positions include Phe-22, 56 to 58, and 80 to 82; these read ALE and AVI. 85-86 contacts (2S)-2-hydroxy-3-oxobutyl phosphate; that stretch reads DT. His-88 acts as the Proton donor in catalysis. Phe-113 lines the 5-amino-6-(D-ribitylamino)uracil pocket. Position 127 (Arg-127) interacts with (2S)-2-hydroxy-3-oxobutyl phosphate.

Belongs to the DMRL synthase family.

The enzyme catalyses (2S)-2-hydroxy-3-oxobutyl phosphate + 5-amino-6-(D-ribitylamino)uracil = 6,7-dimethyl-8-(1-D-ribityl)lumazine + phosphate + 2 H2O + H(+). It functions in the pathway cofactor biosynthesis; riboflavin biosynthesis; riboflavin from 2-hydroxy-3-oxobutyl phosphate and 5-amino-6-(D-ribitylamino)uracil: step 1/2. Catalyzes the formation of 6,7-dimethyl-8-ribityllumazine by condensation of 5-amino-6-(D-ribitylamino)uracil with 3,4-dihydroxy-2-butanone 4-phosphate. This is the penultimate step in the biosynthesis of riboflavin. The polypeptide is 6,7-dimethyl-8-ribityllumazine synthase (Leuconostoc mesenteroides subsp. mesenteroides (strain ATCC 8293 / DSM 20343 / BCRC 11652 / CCM 1803 / JCM 6124 / NCDO 523 / NBRC 100496 / NCIMB 8023 / NCTC 12954 / NRRL B-1118 / 37Y)).